Here is a 199-residue protein sequence, read N- to C-terminus: Recombination protein RecR (199 aa).

The C4-type zinc-finger motif lies at 58 to 73; the sequence is CRICYNITDTEVCNIC. In terms of domain architecture, Toprim spans 81–176; sequence SLICVVSHPM…KVTRIAHGVP (96 aa).

The protein belongs to the RecR family.

Its function is as follows. May play a role in DNA repair. It seems to be involved in an RecBC-independent recombinational process of DNA repair. It may act with RecF and RecO. This is Recombination protein RecR from Thermoanaerobacter sp. (strain X514).